The chain runs to 276 residues: B3 domain-containing protein REM22 (276 aa).

Positions 11–115 (SETMSIQDTV…VFHFCVYEYG (105 aa)) form a DNA-binding region, TF-B3. The interval 141–164 (GNEESTKGLEESPRRGGTSRRRAK) is disordered. The span at 144-154 (ESTKGLEESPR) shows a compositional bias: basic and acidic residues.

The protein localises to the nucleus. The protein is B3 domain-containing protein REM22 (REM22) of Arabidopsis thaliana (Mouse-ear cress).